Consider the following 118-residue polypeptide: Ribonuclease P protein component (118 aa).

This sequence belongs to the RnpA family. In terms of assembly, consists of a catalytic RNA component (M1 or rnpB) and a protein subunit.

It catalyses the reaction Endonucleolytic cleavage of RNA, removing 5'-extranucleotides from tRNA precursor.. Functionally, RNaseP catalyzes the removal of the 5'-leader sequence from pre-tRNA to produce the mature 5'-terminus. It can also cleave other RNA substrates such as 4.5S RNA. The protein component plays an auxiliary but essential role in vivo by binding to the 5'-leader sequence and broadening the substrate specificity of the ribozyme. This Enterococcus faecalis (strain ATCC 700802 / V583) protein is Ribonuclease P protein component.